Here is a 130-residue protein sequence, read N- to C-terminus: Peptide methionine sulfoxide reductase MsrB (130 aa).

The MsrB domain occupies 8–130; that stretch reads LEEWRSMLDP…NSVCLDLVPR (123 aa). Zn(2+)-binding residues include C47, C50, C96, and C99. The active-site Nucleophile is the C119.

Belongs to the MsrB Met sulfoxide reductase family. The cofactor is Zn(2+).

The catalysed reaction is L-methionyl-[protein] + [thioredoxin]-disulfide + H2O = L-methionyl-(R)-S-oxide-[protein] + [thioredoxin]-dithiol. The polypeptide is Peptide methionine sulfoxide reductase MsrB (Pseudomonas fluorescens (strain ATCC BAA-477 / NRRL B-23932 / Pf-5)).